A 365-amino-acid chain; its full sequence is tRNA N6-adenosine threonylcarbamoyltransferase (365 aa).

Fe cation is bound by residues H119 and H123. Substrate is bound by residues 141-145 (LVSGG), D174, G187, and N288. D316 is a Fe cation binding site.

The protein belongs to the KAE1 / TsaD family. The cofactor is Fe(2+).

Its subcellular location is the cytoplasm. The catalysed reaction is L-threonylcarbamoyladenylate + adenosine(37) in tRNA = N(6)-L-threonylcarbamoyladenosine(37) in tRNA + AMP + H(+). Its function is as follows. Required for the formation of a threonylcarbamoyl group on adenosine at position 37 (t(6)A37) in tRNAs that read codons beginning with adenine. Is involved in the transfer of the threonylcarbamoyl moiety of threonylcarbamoyl-AMP (TC-AMP) to the N6 group of A37, together with TsaE and TsaB. TsaD likely plays a direct catalytic role in this reaction. This chain is tRNA N6-adenosine threonylcarbamoyltransferase, found in Rhizobium johnstonii (strain DSM 114642 / LMG 32736 / 3841) (Rhizobium leguminosarum bv. viciae).